The primary structure comprises 500 residues: Glycerol kinase (500 aa).

ADP is bound at residue Thr-16. The ATP site is built by Thr-16 and Thr-17. Thr-16 lines the sn-glycerol 3-phosphate pocket. Arg-20 contacts ADP. The sn-glycerol 3-phosphate site is built by Arg-86, Glu-87, Tyr-138, and Asp-243. The glycerol site is built by Arg-86, Glu-87, Tyr-138, Asp-243, and Gln-244. Residues Thr-265 and Gly-313 each coordinate ADP. ATP is bound by residues Thr-265, Gly-313, Gln-317, and Gly-414. ADP contacts are provided by Gly-414 and Asn-418.

This sequence belongs to the FGGY kinase family.

The catalysed reaction is glycerol + ATP = sn-glycerol 3-phosphate + ADP + H(+). It participates in polyol metabolism; glycerol degradation via glycerol kinase pathway; sn-glycerol 3-phosphate from glycerol: step 1/1. Inhibited by fructose 1,6-bisphosphate (FBP). Key enzyme in the regulation of glycerol uptake and metabolism. Catalyzes the phosphorylation of glycerol to yield sn-glycerol 3-phosphate. This chain is Glycerol kinase, found in Trichormus variabilis (strain ATCC 29413 / PCC 7937) (Anabaena variabilis).